The chain runs to 449 residues: Transport protein ComB (449 aa).

Over 1 to 20 (MKPEFLESAEFYNRRYHNFS) the chain is Cytoplasmic. A helical transmembrane segment spans residues 21 to 41 (SSVIVPMALLLVFLLGFATVA). Topologically, residues 42-449 (EKEMSLSTRA…YYLDQFLNKE (408 aa)) are extracellular.

It belongs to the membrane fusion protein (MFP) (TC 8.A.1) family.

The protein resides in the cell membrane. Functionally, required for induction of competence. This is Transport protein ComB (comB) from Streptococcus pneumoniae (strain ATCC BAA-255 / R6).